The chain runs to 214 residues: Small ribosomal subunit protein uS5 (214 aa).

Positions 54 to 117 (LKYEVMDIKI…KNAKMNIIPV (64 aa)) constitute an S5 DRBM domain.

Belongs to the universal ribosomal protein uS5 family. As to quaternary structure, part of the 30S ribosomal subunit. Contacts protein S4.

Functionally, with S4 and S12 plays an important role in translational accuracy. This is Small ribosomal subunit protein uS5 from Sulfurisphaera tokodaii (strain DSM 16993 / JCM 10545 / NBRC 100140 / 7) (Sulfolobus tokodaii).